The sequence spans 228 residues: Death domain-containing membrane protein NRADD (228 aa).

The Extracellular portion of the chain corresponds to 1 to 52 (MLYNVSKGVVYSDTALQGQDGDREGMWVGAGGALAPNTSSLFPPEPPGASSN). 2 N-linked (GlcNAc...) asparagine glycosylation sites follow: Asn4 and Asn37. Residues 53–73 (IIPVYCALLATVILGLLAYVA) form a helical; Signal-anchor for type III membrane protein membrane-spanning segment. The Cytoplasmic portion of the chain corresponds to 74–228 (FKCWRSHKQR…SSPAESSSVV (155 aa)). The disordered stretch occupies residues 87–122 (AKARTVELGDPDRDQRRGDSNVFVDSPPSLEPCIPS). The segment covering 90 to 105 (RTVELGDPDRDQRRGD) has biased composition (basic and acidic residues). The Death domain maps to 143–222 (EEVQRLLMMG…DVVQVLSSPA (80 aa)).

In terms of assembly, interacts with NGFR. Interacts with NTRK1. Interacts with SORT1. In terms of tissue distribution, detected in lung and testis.

The protein resides in the cell membrane. The protein localises to the nucleus. Modulates NTRK1 signaling. Can activate several intracellular signaling pathways, leading to activation of JUN. Promotes apoptosis. Promotes translocation of SORT1 to the cell membrane, and thereby hinders lysosomal degradation of SOTR1 and promotes its interaction with NGFR. The chain is Death domain-containing membrane protein NRADD (Nradd) from Mus musculus (Mouse).